The primary structure comprises 177 residues: Inner membrane protein p22 (177 aa).

The Intravirion portion of the chain corresponds to M1 to T7. Residues I8–Y28 traverse the membrane as a helical segment. At Y29 to A177 the chain is on the virion surface side.

This sequence belongs to the asfivirus inner membrane protein p22 family.

Its subcellular location is the virion membrane. It is found in the host cell membrane. The sequence is that of Inner membrane protein p22 from African swine fever virus (isolate Warthog/Namibia/Wart80/1980) (ASFV).